A 130-amino-acid chain; its full sequence is Small ribosomal subunit protein uS8 (130 aa).

It belongs to the universal ribosomal protein uS8 family. In terms of assembly, part of the 30S ribosomal subunit. Contacts proteins S5 and S12.

In terms of biological role, one of the primary rRNA binding proteins, it binds directly to 16S rRNA central domain where it helps coordinate assembly of the platform of the 30S subunit. This is Small ribosomal subunit protein uS8 from Cronobacter sakazakii (strain ATCC BAA-894) (Enterobacter sakazakii).